The following is a 62-amino-acid chain: uncharacterized protein (62 aa).

Residues 26–62 (YELATLYEAMQKENEEQIEQSKNKLERLRKEWIRLNG) are a coiled coil.

This is an uncharacterized protein from Bacillus subtilis (strain 168).